Consider the following 399-residue polypeptide: Ribonuclease D (399 aa).

Residues Arg31–Leu197 enclose the 3'-5' exonuclease domain. One can recognise an HRDC domain in the interval Asn239–Asp318.

The protein belongs to the RNase D family. A divalent metal cation serves as cofactor.

Its subcellular location is the cytoplasm. It carries out the reaction Exonucleolytic cleavage that removes extra residues from the 3'-terminus of tRNA to produce 5'-mononucleotides.. In terms of biological role, exonuclease involved in the 3' processing of various precursor tRNAs. Initiates hydrolysis at the 3'-terminus of an RNA molecule and releases 5'-mononucleotides. In Haemophilus influenzae (strain ATCC 51907 / DSM 11121 / KW20 / Rd), this protein is Ribonuclease D.